Reading from the N-terminus, the 41-residue chain is MTKITIPTALSAKVHGEGQHLFEPMAARCTCTTIISSSSTF.

Positions 1 to 27 (MTKITIPTALSAKVHGEGQHLFEPMAA) are excised as a propeptide. Position 28 is an N2,N2-dimethylarginine; in form plantazolicin A (arginine 28). The segment at residues 28–29 (RC) is a cross-link (thiazole-4-carboxylic acid (Arg-Cys)). 2 cross-links (5-methyloxazole-4-carboxylic acid (Cys-Thr)) span residues 29 to 30 (CT) and 31 to 32 (CT). A cross-link (thiazole-4-carboxylic acid (Thr-Cys)) is located at residues 30 to 31 (TC). The 5-methyloxazole-4-carboxylic acid (Thr-Thr) cross-link spans 32 to 33 (TT). The oxazole-4-carboxylic acid (Ile-Ser) cross-link spans 35–36 (IS). 3 consecutive cross-links (oxazole-4-carboxylic acid (Ser-Ser)) follow at residues 36 to 37 (SS), 37 to 38 (SS), and 38 to 39 (SS). A cross-link (5-methyloxazoline-4-carboxylic acid (Ser-Thr)) is located at residues 39–40 (ST).

Post-translationally, maturation of thiazole and oxazole containing antibiotics involves the enzymatic condensation of a Cys, Ser or Thr with the alpha-carbonyl of the preceding amino acid to form a thioether or ether bond, then dehydration to form a double bond with the alpha-amino nitrogen. Thiazoline or oxazoline ring are dehydrogenated to form thiazole or oxazole rings.

It localises to the secreted. It is found in the cell wall. Functionally, peptide antibiotic inhibiting growth of Gram-positive bacteria. The mode of action appears to be disruption of cell walls and lysis of cells. This chain is Plantazolicin, found in Bacillus pumilus (strain ATCC 7061 / DSM 27 / CCUG 26015 / JCM 2508 / NBRC 12092 / NCIMB 9369 / NCTC 10337 / NRRL NRS-272 / CCM 2144).